Reading from the N-terminus, the 343-residue chain is Heme A synthase (343 aa).

Helical transmembrane passes span 13 to 33, 96 to 116, 130 to 150, 161 to 181, 197 to 217, 258 to 278, 294 to 314, and 318 to 338; these read VAIW…VGGA, HRLL…VFLI, AMLG…SSGL, LMTH…TALD, GWAL…ALVA, FNHR…VVLA, AVAA…MAAV, and LGVL…AFAW. A heme-binding site is contributed by histidine 260. Heme is bound at residue histidine 322.

This sequence belongs to the COX15/CtaA family. Type 2 subfamily. Interacts with CtaB. Heme b serves as cofactor.

It is found in the cell membrane. It catalyses the reaction Fe(II)-heme o + 2 A + H2O = Fe(II)-heme a + 2 AH2. Its pathway is porphyrin-containing compound metabolism; heme A biosynthesis; heme A from heme O: step 1/1. Functionally, catalyzes the conversion of heme O to heme A by two successive hydroxylations of the methyl group at C8. The first hydroxylation forms heme I, the second hydroxylation results in an unstable dihydroxymethyl group, which spontaneously dehydrates, resulting in the formyl group of heme A. This Caulobacter vibrioides (strain ATCC 19089 / CIP 103742 / CB 15) (Caulobacter crescentus) protein is Heme A synthase.